An 889-amino-acid chain; its full sequence is Translation initiation factor IF-2 (889 aa).

Disordered regions lie at residues 47-85 (GHLKKQHGDESEAKPNKLTLNRKTKSTLTMGHGSKAKSV) and 206-302 (AEAA…FTKP). 3 stretches are compositionally biased toward basic and acidic residues: residues 52-61 (QHGDESEAKP), 214-241 (AAKKLAEENEGRWKEQEAERKAKEKEVV), and 252-263 (AEDKSDSADESG). Residues 389–558 (TRAPVVTIMG…LLQSEVLELT (170 aa)) form the tr-type G domain. The segment at 398–405 (GHVDHGKT) is G1. 398-405 (GHVDHGKT) contributes to the GTP binding site. Positions 423–427 (GITQH) are G2. The tract at residues 444 to 447 (DTPG) is G3. GTP-binding positions include 444–448 (DTPGH) and 498–501 (NKMD). A G4 region spans residues 498 to 501 (NKMD). The segment at 534–536 (SAK) is G5.

The protein belongs to the TRAFAC class translation factor GTPase superfamily. Classic translation factor GTPase family. IF-2 subfamily.

It localises to the cytoplasm. In terms of biological role, one of the essential components for the initiation of protein synthesis. Protects formylmethionyl-tRNA from spontaneous hydrolysis and promotes its binding to the 30S ribosomal subunits. Also involved in the hydrolysis of GTP during the formation of the 70S ribosomal complex. The polypeptide is Translation initiation factor IF-2 (Colwellia psychrerythraea (strain 34H / ATCC BAA-681) (Vibrio psychroerythus)).